Reading from the N-terminus, the 197-residue chain is Imidazoleglycerol-phosphate dehydratase (197 aa).

It belongs to the imidazoleglycerol-phosphate dehydratase family.

The protein resides in the cytoplasm. The catalysed reaction is D-erythro-1-(imidazol-4-yl)glycerol 3-phosphate = 3-(imidazol-4-yl)-2-oxopropyl phosphate + H2O. It participates in amino-acid biosynthesis; L-histidine biosynthesis; L-histidine from 5-phospho-alpha-D-ribose 1-diphosphate: step 6/9. In Novosphingobium aromaticivorans (strain ATCC 700278 / DSM 12444 / CCUG 56034 / CIP 105152 / NBRC 16084 / F199), this protein is Imidazoleglycerol-phosphate dehydratase.